A 228-amino-acid chain; its full sequence is Vesicle transport protein SEC20 (228 aa).

Residues 1 to 199 are Cytoplasmic-facing; the sequence is MAAPQDVHVR…LITKYNRREL (199 aa). Residues 37–90 adopt a coiled-coil conformation; the sequence is LSELTELNTKVKEKFQQLKQRIQELEQSAREQDKESEKQLLLQEVENHKKQMLS. Residues 200-220 traverse the membrane as a helical; Anchor for type IV membrane protein segment; sequence TDKLLIFLALALFLATVLYIV. The Lumenal segment spans residues 221–228; sequence KKRLFPFL.

The protein belongs to the SEC20 family. In terms of assembly, component of a SNARE complex consisting of STX18, USE1L, BNIP1/SEC20L and SEC22B. Interacts directly with STX18, RINT1/TIP20L and NAPA. Interacts with ZW10 through RINT1. Interacts with BCL2. Interacts with RNF186. Interacts with RNF185. Interacts with SQSTM1; increased by 'Lys-63'-linked polyubiquitination of BNIP1. Post-translationally, polyubiquitinated. 'Lys-63'-linked polyubiquitination by RNF185 increases the interaction with the autophagy receptor SQSTM1. Undergoes 'Lys-29'- and 'Lys-63'-linked polyubiquitination by RNF186 that may regulate BNIP1 localization to the mitochondrion.

The protein resides in the endoplasmic reticulum membrane. The protein localises to the mitochondrion membrane. As part of a SNARE complex may be involved in endoplasmic reticulum membranes fusion and be required for the maintenance of endoplasmic reticulum organization. Also plays a role in apoptosis. It is for instance required for endoplasmic reticulum stress-induced apoptosis. As a substrate of RNF185 interacting with SQSTM1, might also be involved in mitochondrial autophagy. The polypeptide is Vesicle transport protein SEC20 (Mus musculus (Mouse)).